Consider the following 131-residue polypeptide: Acidic leucine-rich nuclear phosphoprotein 32 family member D (131 aa).

LRR repeat units lie at residues 18–38 (DVKELFLDNSQSNEGKLEGLT), 43–64 (ELELLNTINIGLTSIANLPKLN), 65–87 (KLKKLELSSNRASVGLEVLAEKC), 89–110 (NLIHLNLSGNKIKDLSTIEPLK), and 114–131 (NLESLDLFTCEVTNLNNY).

The protein belongs to the ANP32 family.

The sequence is that of Acidic leucine-rich nuclear phosphoprotein 32 family member D (ANP32D) from Homo sapiens (Human).